The sequence spans 273 residues: NADPH-dependent 7-cyano-7-deazaguanine reductase (273 aa).

81–83 (VES) serves as a coordination point for substrate. 83–84 (SK) lines the NADPH pocket. Cysteine 179 functions as the Thioimide intermediate in the catalytic mechanism. Residue aspartate 186 is the Proton donor of the active site. 218–219 (AE) is a binding site for substrate. 247–248 (RG) contributes to the NADPH binding site.

Belongs to the GTP cyclohydrolase I family. QueF type 2 subfamily. As to quaternary structure, homodimer.

Its subcellular location is the cytoplasm. It catalyses the reaction 7-aminomethyl-7-carbaguanine + 2 NADP(+) = 7-cyano-7-deazaguanine + 2 NADPH + 3 H(+). It participates in tRNA modification; tRNA-queuosine biosynthesis. Functionally, catalyzes the NADPH-dependent reduction of 7-cyano-7-deazaguanine (preQ0) to 7-aminomethyl-7-deazaguanine (preQ1). This is NADPH-dependent 7-cyano-7-deazaguanine reductase from Rickettsia akari (strain Hartford).